A 431-amino-acid polypeptide reads, in one-letter code: Gamma-glutamyl phosphate reductase (431 aa).

Belongs to the gamma-glutamyl phosphate reductase family.

Its subcellular location is the cytoplasm. The catalysed reaction is L-glutamate 5-semialdehyde + phosphate + NADP(+) = L-glutamyl 5-phosphate + NADPH + H(+). The protein operates within amino-acid biosynthesis; L-proline biosynthesis; L-glutamate 5-semialdehyde from L-glutamate: step 2/2. In terms of biological role, catalyzes the NADPH-dependent reduction of L-glutamate 5-phosphate into L-glutamate 5-semialdehyde and phosphate. The product spontaneously undergoes cyclization to form 1-pyrroline-5-carboxylate. The polypeptide is Gamma-glutamyl phosphate reductase (Acetivibrio thermocellus (strain ATCC 27405 / DSM 1237 / JCM 9322 / NBRC 103400 / NCIMB 10682 / NRRL B-4536 / VPI 7372) (Clostridium thermocellum)).